A 207-amino-acid polypeptide reads, in one-letter code: Guanylate kinase (207 aa).

The region spanning 5-184 (GNLFIVSAPS…ALADLKSIIF (180 aa)) is the Guanylate kinase-like domain. Position 12-19 (12-19 (APSGAGKS)) interacts with ATP.

This sequence belongs to the guanylate kinase family.

It is found in the cytoplasm. It carries out the reaction GMP + ATP = GDP + ADP. Its function is as follows. Essential for recycling GMP and indirectly, cGMP. This Shewanella denitrificans (strain OS217 / ATCC BAA-1090 / DSM 15013) protein is Guanylate kinase.